We begin with the raw amino-acid sequence, 128 residues long: Con-Ins F1 (128 aa).

Positions 1 to 24 are cleaved as a signal peptide; sequence MTTSSYFLLVTLGLLLYVCRSSFG. Cystine bridges form between Cys29–Cys104, Cys41–Cys107, Cys53–Cys120, and Cys106–Cys111. A propeptide spans 59–89 (c peptide); the sequence is LQGGTGKKRGRASPLRKRRAFLSMLKARAKR. The residue at position 115 (Glu115) is a 4-carboxyglutamate; partial. Ser127 is modified (serine amide).

Belongs to the insulin family. Heterodimer of A and B chains; disulfide-linked. As to expression, expressed by the venom gland.

The protein resides in the secreted. Its function is as follows. This venom insulin facilitates prey capture by rapidly inducing hypoglycemic shock. Intraperitoneal injection of this peptide into zebrafish lowers blood glucose with the same potency than human insulin. In vivo, when applied to water, this peptide reduces overall locomotor activity of zebrafish larvae, observed as a significant decrease in the percentage of time spent swimming and movement frequency. This is Con-Ins F1 from Conus floridulus (Cone snail).